The following is a 540-amino-acid chain: Chaperonin GroEL (540 aa).

ATP contacts are provided by residues 29 to 32, 86 to 90, Gly413, 476 to 478, and Asp492; these read TLGP, DGTTT, and NAA.

It belongs to the chaperonin (HSP60) family. As to quaternary structure, forms a cylinder of 14 subunits composed of two heptameric rings stacked back-to-back. Interacts with the co-chaperonin GroES.

The protein resides in the cytoplasm. The catalysed reaction is ATP + H2O + a folded polypeptide = ADP + phosphate + an unfolded polypeptide.. Together with its co-chaperonin GroES, plays an essential role in assisting protein folding. The GroEL-GroES system forms a nano-cage that allows encapsulation of the non-native substrate proteins and provides a physical environment optimized to promote and accelerate protein folding. The chain is Chaperonin GroEL from Streptococcus agalactiae.